Consider the following 372-residue polypeptide: Aminomethyltransferase (372 aa).

The protein belongs to the GcvT family. The glycine cleavage system is composed of four proteins: P, T, L and H.

It carries out the reaction N(6)-[(R)-S(8)-aminomethyldihydrolipoyl]-L-lysyl-[protein] + (6S)-5,6,7,8-tetrahydrofolate = N(6)-[(R)-dihydrolipoyl]-L-lysyl-[protein] + (6R)-5,10-methylene-5,6,7,8-tetrahydrofolate + NH4(+). Its function is as follows. The glycine cleavage system catalyzes the degradation of glycine. In Burkholderia mallei (strain NCTC 10247), this protein is Aminomethyltransferase.